The sequence spans 158 residues: Anaerobic nitrite reductase AHB2 (158 aa).

A Globin domain is found at 5-154; sequence GFTEKQEALV…LALAIKTEMK (150 aa). Residues 38–42 carry the Homodimerization motif; that stretch reads EIAPA. Heme b contacts are provided by Ser-48, Lys-62, His-66, and His-101. The Homodimerization signature appears at 108 to 120; sequence DPHFEVVKEALLR.

Belongs to the plant globin family. As to quaternary structure, unable to dimerize. Requires heme b as cofactor. As to expression, expressed in rosette leaves but not in roots.

The protein localises to the cytoplasm. Its subcellular location is the nucleus. It carries out the reaction Fe(III)-heme b-[protein] + nitric oxide + H2O = Fe(II)-heme b-[protein] + nitrite + 2 H(+). Its function is as follows. Phytoglobin that reduces nitrite to nitric oxide (NO) under anoxic conditions (e.g. during flooding or in waterlogged soil). May not function as an oxygen storage or transport protein. Has an unusually high affinity for O(2) through an hexacoordinate heme iron because of a very low dissociation constant. In Arabidopsis thaliana (Mouse-ear cress), this protein is Anaerobic nitrite reductase AHB2.